We begin with the raw amino-acid sequence, 303 residues long: Phytochrome-associated serine/threonine-protein phosphatase (303 aa).

Residues Asp-50, His-52, Asp-78, and Asn-110 each contribute to the Zn(2+) site. His-111 (proton donor) is an active-site residue. Residues His-160 and His-234 each contribute to the Zn(2+) site.

This sequence belongs to the PPP phosphatase family. PP-6 (PP-V) subfamily. In terms of assembly, interacts with PHYA and PHYB, mostly when they are phosphorylated and in Pfr forms. It depends on Zn(2+) as a cofactor. In terms of tissue distribution, mostly expressed in flowers and stems.

Its subcellular location is the cytoplasm. It carries out the reaction O-phospho-L-seryl-[protein] + H2O = L-seryl-[protein] + phosphate. It catalyses the reaction O-phospho-L-threonyl-[protein] + H2O = L-threonyl-[protein] + phosphate. Functionally, catalytic subunit of protein phosphatase 6 (PP6). Dephosphorylates phosphorylated phytochromes, with a preference toward Pfr forms. Plays a major role in the photoperiodic control of flowering time in long days by modulating phytochrome signals in flowering time control. This Pisum sativum (Garden pea) protein is Phytochrome-associated serine/threonine-protein phosphatase.